We begin with the raw amino-acid sequence, 274 residues long: Large ribosomal subunit protein uL2 (274 aa).

A disordered region spans residues 225-274; the sequence is MNPVDHPHGGGEGRSPIGRHPVTPWGKPTLGVKTRKKNKASSKLIIKRRK. Residues 257–274 are compositionally biased toward basic residues; that stretch reads KTRKKNKASSKLIIKRRK.

The protein belongs to the universal ribosomal protein uL2 family. Part of the 50S ribosomal subunit. Forms a bridge to the 30S subunit in the 70S ribosome.

In terms of biological role, one of the primary rRNA binding proteins. Required for association of the 30S and 50S subunits to form the 70S ribosome, for tRNA binding and peptide bond formation. It has been suggested to have peptidyltransferase activity; this is somewhat controversial. Makes several contacts with the 16S rRNA in the 70S ribosome. The protein is Large ribosomal subunit protein uL2 of Carboxydothermus hydrogenoformans (strain ATCC BAA-161 / DSM 6008 / Z-2901).